Reading from the N-terminus, the 133-residue chain is MEKTKLYECTVIIDGGLQDEAIAAAMEMVQKVITEKGGSISSVLEVGRRKTAYPINKKTIGYYAHIEFTAAAPVIGAIEKVLRYEEDLLRYLIIHLTSALLEMRKRVEKYSVVIGSPEDTAAAESDDSGKDAK.

It belongs to the bacterial ribosomal protein bS6 family.

Functionally, binds together with bS18 to 16S ribosomal RNA. This is Small ribosomal subunit protein bS6 from Chlorobium limicola (strain DSM 245 / NBRC 103803 / 6330).